An 89-amino-acid chain; its full sequence is Mapacalcine (89 aa).

Glutamine amide is present on Gln89.

Homodimer. Post-translationally, contains disulfide bonds which may also be involved in dimerization.

Its function is as follows. Blocks calcium currents via interaction with a yet unknown target protein. Has no effect on L-type, T-type, N-type or P/Q-type voltage-gated calcium channels (VGCC). Has no effect on voltage-gated potassium or chloride channels. Blocks non-L-type VGCC calcium currents in mouse duodenal myocytes (IC(50)=0.2 uM). Blocks calcium influx induced by hypoxia/reoxygenation in rat hepatocytes. In Pione vastifica (Boring sponge), this protein is Mapacalcine.